A 513-amino-acid polypeptide reads, in one-letter code: Activin receptor type-2A (513 aa).

The N-terminal stretch at 1–19 is a signal peptide; that stretch reads MGAAAKLAFAVFLISCSSG. Residues 20-135 lie on the Extracellular side of the membrane; the sequence is AILGRSETQE…TSNPVTPKPP (116 aa). Disulfide bonds link Cys30–Cys60, Cys50–Cys78, Cys85–Cys104, Cys91–Cys103, and Cys105–Cys110. 2 N-linked (GlcNAc...) asparagine glycosylation sites follow: Asn43 and Asn66. Residues 136–161 form a helical membrane-spanning segment; that stretch reads YYNILLYSLVPLMLIAGIVICAFWVY. The Cytoplasmic portion of the chain corresponds to 162 to 513; sequence RHHKMAYPPV…VDFPPKESSL (352 aa). In terms of domain architecture, Protein kinase spans 192 to 485; that stretch reads LQLLEVKARG…GERITQMQRL (294 aa). ATP-binding positions include 198–206 and Lys219; that span reads KARGRFGCV. Asp322 acts as the Proton acceptor in catalysis.

This sequence belongs to the protein kinase superfamily. TKL Ser/Thr protein kinase family. TGFB receptor subfamily. As to quaternary structure, part of a complex consisting of MAGI2/ARIP1, ACVR2A, ACVR1B and SMAD3. Interacts with MAGI2/ARIP1. Interacts with type I receptor ACVR1. Interacts with BMP7. Interacts with TSC22D1/TSC-22. Interacts with activin A/INHBA. Mg(2+) is required as a cofactor. It depends on Mn(2+) as a cofactor.

It localises to the cell membrane. It catalyses the reaction L-threonyl-[receptor-protein] + ATP = O-phospho-L-threonyl-[receptor-protein] + ADP + H(+). The catalysed reaction is L-seryl-[receptor-protein] + ATP = O-phospho-L-seryl-[receptor-protein] + ADP + H(+). Functionally, on ligand binding, forms a receptor complex consisting of two type II and two type I transmembrane serine/threonine kinases. Type II receptors phosphorylate and activate type I receptors which autophosphorylate, then bind and activate SMAD transcriptional regulators. Receptor for activin A, activin B and inhibin A. Mediates induction of adipogenesis by GDF6. In Homo sapiens (Human), this protein is Activin receptor type-2A.